The following is a 175-amino-acid chain: Mitochondrial inner membrane protease subunit 2 (175 aa).

The helical transmembrane segment at 19–37 (FFVAVPVAVTFLDRVACVA) threads the bilayer. Active-site residues include Ser43 and Lys91.

The protein belongs to the peptidase S26 family. IMP2 subfamily. As to quaternary structure, heterodimer of 2 subunits, IMMPL1 and IMMPL2.

The protein resides in the mitochondrion inner membrane. Its function is as follows. Catalyzes the removal of transit peptides required for the targeting of proteins from the mitochondrial matrix, across the inner membrane, into the inter-membrane space. Known to process the nuclear encoded protein DIABLO. The polypeptide is Mitochondrial inner membrane protease subunit 2 (Immp2l) (Mus musculus (Mouse)).